The chain runs to 290 residues: Porphobilinogen deaminase (290 aa).

At cysteine 238 the chain carries S-(dipyrrolylmethanemethyl)cysteine.

The protein belongs to the HMBS family. As to quaternary structure, monomer. It depends on dipyrromethane as a cofactor.

It carries out the reaction 4 porphobilinogen + H2O = hydroxymethylbilane + 4 NH4(+). The protein operates within porphyrin-containing compound metabolism; protoporphyrin-IX biosynthesis; coproporphyrinogen-III from 5-aminolevulinate: step 2/4. Tetrapolymerization of the monopyrrole PBG into the hydroxymethylbilane pre-uroporphyrinogen in several discrete steps. The polypeptide is Porphobilinogen deaminase (Clostridium botulinum (strain Eklund 17B / Type B)).